The following is a 307-amino-acid chain: 2-dehydropantoate 2-reductase (307 aa).

NADP(+) is bound by residues 7 to 12, Asn102, and Ala128; that span reads GSGAMG. Residue Asn102 participates in substrate binding. Lys184 serves as the catalytic Proton donor. Substrate is bound by residues Asn188, Asn192, and Ser255. Glu268 is an NADP(+) binding site.

This sequence belongs to the ketopantoate reductase family.

The protein resides in the cytoplasm. The enzyme catalyses (R)-pantoate + NADP(+) = 2-dehydropantoate + NADPH + H(+). It functions in the pathway cofactor biosynthesis; (R)-pantothenate biosynthesis; (R)-pantoate from 3-methyl-2-oxobutanoate: step 2/2. Functionally, catalyzes the NADPH-dependent reduction of ketopantoate into pantoic acid. The chain is 2-dehydropantoate 2-reductase (apbA) from Streptococcus pyogenes serotype M1.